Consider the following 683-residue polypeptide: DNA ligase (683 aa).

Residues 36-40 (DAVYD), 85-86 (SL), and Glu-121 each bind NAD(+). Residue Lys-123 is the N6-AMP-lysine intermediate of the active site. Residues Arg-144, Glu-180, Lys-296, and Lys-320 each contribute to the NAD(+) site. Residues Cys-413, Cys-416, Cys-431, and Cys-437 each coordinate Zn(2+). Residues 605–683 (PSEGHLSGKV…ESGWRVLAGL (79 aa)) enclose the BRCT domain.

The protein belongs to the NAD-dependent DNA ligase family. LigA subfamily. Mg(2+) is required as a cofactor. Requires Mn(2+) as cofactor.

The enzyme catalyses NAD(+) + (deoxyribonucleotide)n-3'-hydroxyl + 5'-phospho-(deoxyribonucleotide)m = (deoxyribonucleotide)n+m + AMP + beta-nicotinamide D-nucleotide.. DNA ligase that catalyzes the formation of phosphodiester linkages between 5'-phosphoryl and 3'-hydroxyl groups in double-stranded DNA using NAD as a coenzyme and as the energy source for the reaction. It is essential for DNA replication and repair of damaged DNA. The polypeptide is DNA ligase (Gluconobacter oxydans (strain 621H) (Gluconobacter suboxydans)).